The primary structure comprises 395 residues: Na(+)/H(+) antiporter NhaA (395 aa).

Helical transmembrane passes span 11–31 (FAMEAASGLLLIAAAILALII), 61–81 (LLLWINDGLMALFFLLIGLEV), 96–116 (IVLPGAAAIGGMLVPALIYWF), 127–147 (GWAIPTATDIAFALGVLALLG), 156–176 (LFLMTLAIIDDLGAIVIIAIF), 179–199 (GTLSTLSLMLAGACIAALVAM), 202–222 (MGVVKLGPYMIIGLILWVCVL), 264–284 (FGILPLFAFANAGLSLSGVTL), 295–315 (IAVGLLLGKTIGVFGLTWMAV), 331–351 (VLGVAILCGIGFTMSLFVGSL), and 366–386 (MGILTGSLFAALIGYAVTAAA).

Belongs to the NhaA Na(+)/H(+) (TC 2.A.33) antiporter family.

The protein resides in the cell inner membrane. It carries out the reaction Na(+)(in) + 2 H(+)(out) = Na(+)(out) + 2 H(+)(in). Its function is as follows. Na(+)/H(+) antiporter that extrudes sodium in exchange for external protons. This Pseudomonas fluorescens (strain ATCC BAA-477 / NRRL B-23932 / Pf-5) protein is Na(+)/H(+) antiporter NhaA.